The sequence spans 278 residues: MFQPNTIVKVGNIVFSNETPFSLIVGPCQMESRDHAFEMAGRIKTITDQIGIGFVYKSSYDKANRTSLGAARGIGLEKAMAIFSDIKKEFGCPVLTDVHTEEQCAAVGSVVDVLQIPAFLCRQTDLLVAAAKTGRVINIKKGQFLAPWDMENVLKKVTQSGNPHVMLCERGTSFGYNRLISDMRSLPILRSFGAPVIFDATHSVQEPGGQGDSSGGQRQFVEVLARAAVSVGVAGIFLETHQDPDNAPSDGPNMVKIDHLQRLLETLMEFDYLSKKVN.

It belongs to the KdsA family.

It localises to the cytoplasm. It catalyses the reaction D-arabinose 5-phosphate + phosphoenolpyruvate + H2O = 3-deoxy-alpha-D-manno-2-octulosonate-8-phosphate + phosphate. It functions in the pathway carbohydrate biosynthesis; 3-deoxy-D-manno-octulosonate biosynthesis; 3-deoxy-D-manno-octulosonate from D-ribulose 5-phosphate: step 2/3. Its pathway is bacterial outer membrane biogenesis; lipopolysaccharide biosynthesis. This is 2-dehydro-3-deoxyphosphooctonate aldolase from Bartonella quintana (strain Toulouse) (Rochalimaea quintana).